Consider the following 793-residue polypeptide: Kinesin-like protein KIN-14C (793 aa).

The interval 1 to 43 (MASRNQNRPPRSPNAKKEGLGGISFDKRRKVETQGGTGRRQAF) is disordered. Residues 1–69 (MASRNQNRPP…IEECGKVDFT (69 aa)) form a globular region. A compositionally biased stretch (basic and acidic residues) spans 15 to 32 (AKKEGLGGISFDKRRKVE). Residues 120–375 (KENLKVSLES…EQQLAIANER (256 aa)) adopt a coiled-coil conformation. In terms of domain architecture, Kinesin motor spans 431-772 (NIRVFCRVRP…LRFAARVNAC (342 aa)). Residue 516–523 (GQTGSGKT) participates in ATP binding.

It belongs to the TRAFAC class myosin-kinesin ATPase superfamily. Kinesin family. KIN-14 subfamily.

It is found in the cytoplasm. The protein localises to the cytoskeleton. It localises to the spindle. The protein resides in the phragmoplast. Its subcellular location is the chromosome. It is found in the centromere. The protein localises to the kinetochore. Kinesin that supports microtubule movement in an ATP-dependent manner and has a minus-end directed polarity. Plays a crucial role in spindle morphogenesis in male meiosis. In mitosis, is required for normal microtubule accumulation at the spindle poles during prophase and may play a role in spindle assembly during prometaphase. The sequence is that of Kinesin-like protein KIN-14C from Arabidopsis thaliana (Mouse-ear cress).